The primary structure comprises 436 residues: 3-ketoacyl-CoA thiolase (436 aa).

C99 (acyl-thioester intermediate) is an active-site residue. Residues H392 and C422 each act as proton acceptor in the active site.

The protein belongs to the thiolase-like superfamily. Thiolase family. As to quaternary structure, heterotetramer of two alpha chains (FadJ) and two beta chains (FadI).

Its subcellular location is the cytoplasm. It carries out the reaction an acyl-CoA + acetyl-CoA = a 3-oxoacyl-CoA + CoA. The protein operates within lipid metabolism; fatty acid beta-oxidation. Functionally, catalyzes the final step of fatty acid oxidation in which acetyl-CoA is released and the CoA ester of a fatty acid two carbons shorter is formed. This chain is 3-ketoacyl-CoA thiolase, found in Shigella boydii serotype 18 (strain CDC 3083-94 / BS512).